The sequence spans 296 residues: Acetylglutamate kinase (296 aa).

Substrate is bound by residues 68 to 69 (GG), arginine 90, and asparagine 193.

The protein belongs to the acetylglutamate kinase family. ArgB subfamily.

The protein resides in the cytoplasm. It catalyses the reaction N-acetyl-L-glutamate + ATP = N-acetyl-L-glutamyl 5-phosphate + ADP. It functions in the pathway amino-acid biosynthesis; L-arginine biosynthesis; N(2)-acetyl-L-ornithine from L-glutamate: step 2/4. Catalyzes the ATP-dependent phosphorylation of N-acetyl-L-glutamate. In Acidothermus cellulolyticus (strain ATCC 43068 / DSM 8971 / 11B), this protein is Acetylglutamate kinase.